Here is a 212-residue protein sequence, read N- to C-terminus: Ribonuclease HII (212 aa).

The 206-residue stretch at 1–206 (MICGVDEAGK…VKNLLHQKNQ (206 aa)) folds into the RNase H type-2 domain. A divalent metal cation is bound by residues aspartate 6, glutamate 7, and aspartate 101.

It belongs to the RNase HII family. Mn(2+) is required as a cofactor. It depends on Mg(2+) as a cofactor.

The protein localises to the cytoplasm. The enzyme catalyses Endonucleolytic cleavage to 5'-phosphomonoester.. Endonuclease that specifically degrades the RNA of RNA-DNA hybrids. The sequence is that of Ribonuclease HII from Methanospirillum hungatei JF-1 (strain ATCC 27890 / DSM 864 / NBRC 100397 / JF-1).